Here is a 294-residue protein sequence, read N- to C-terminus: Beta-lactamase SME-1 (294 aa).

Positions 1-27 (MSNKVNFKTASFLFSVCLALSAFNAHA) are cleaved as a signal peptide. Cys-72 and Cys-242 are oxidised to a cystine. The active-site Nucleophile; acyl-ester intermediate is Ser-73. A beta-lactam contacts are provided by Ser-73, Lys-76, Ser-133, and Asn-135. Catalysis depends on Glu-172, which acts as the Proton acceptor. Residue Thr-239 coordinates a beta-lactam.

Belongs to the class-A beta-lactamase family.

The catalysed reaction is a beta-lactam + H2O = a substituted beta-amino acid. With respect to regulation, partially inhibited by the beta-lactamase-blocking agents, clavulanic acid and tazobactam. Not inhibited by EDTA. Its function is as follows. Class A beta-lactamase which confers resistance to the beta-lactam antibiotics, including penicillins, some cephalosporins and carbapenems, to JM109 strain E.coli. Acts via hydrolysis of the beta-lactam ring. Has penicillin-, cephalosporin- and carbapenem-hydrolyzing activities. This is Beta-lactamase SME-1 from Serratia marcescens.